The chain runs to 319 residues: Transmembrane and ubiquitin-like domain-containing protein 2 (319 aa).

The chain crosses the membrane as a helical span at residues 36–56 (VMVVAGVVALTLALVLAWLST). 2 disordered regions span residues 88 to 128 (VNQG…ARGE) and 145 to 165 (RQAG…DGSC). The segment covering 95 to 111 (PTEHPHPSGGNDDKAEE) has biased composition (basic and acidic residues). Positions 173-246 (INVRLKFLND…IHCHRSPPGA (74 aa)) constitute a Ubiquitin-like domain. The next 2 membrane-spanning stretches (helical) occupy residues 264–284 (LGVN…GVVW) and 298–318 (ATIS…GMYG).

It localises to the membrane. This Mus musculus (Mouse) protein is Transmembrane and ubiquitin-like domain-containing protein 2 (Tmub2).